We begin with the raw amino-acid sequence, 141 residues long: Cholinesterase (141 aa).

Residue Asn-39 is glycosylated (N-linked (GlcNAc...) asparagine). 49–50 contacts substrate; the sequence is GG. Ser-131 acts as the Acyl-ester intermediate in catalysis. A Phosphoserine modification is found at Ser-131.

The protein belongs to the type-B carboxylesterase/lipase family. As to quaternary structure, homotetramer; disulfide-linked. Dimer of dimers. In terms of tissue distribution, present in most cells except erythrocytes.

The protein localises to the secreted. The enzyme catalyses an acylcholine + H2O = a carboxylate + choline + H(+). In terms of biological role, esterase with broad substrate specificity. Contributes to the inactivation of the neurotransmitter acetylcholine. Can degrade neurotoxic organophosphate esters. In Sus scrofa (Pig), this protein is Cholinesterase (BCHE).